The following is a 342-amino-acid chain: MDGAGSLTRSFFRSLRPQADLKAAAIGAVVLLREWVQDKRRERLHAARAAAKDKIKAKAVVEREPPPRVVALVERYLPRRVGISMTVLLLIGSCGFGIVKGGHLQDFVTAISDARNAMANSAGFRITSVVINGRKQLTQDEILAIGGVSGRSSLLFLDADAVRDKLKANPWIADATVLKLYPGQLMIELTERKAFALWQEAGRLSVIADDGAVLEPYVSRRFLSLPLVVGKGADTQARDFLALLARYPQVNSITKAAIFVGERRWNLRLKDGLDIRLPEQDVGNALAMLSRLDKEDKLFSRDIVAVDMRLPDRLVVQLSEDAAKAREEQFKDKKKKKAGDAA.

Topologically, residues 1-80 (MDGAGSLTRS…ALVERYLPRR (80 aa)) are cytoplasmic. A helical membrane pass occupies residues 81 to 99 (VGISMTVLLLIGSCGFGIV). The Periplasmic segment spans residues 100–342 (KGGHLQDFVT…KKKKKAGDAA (243 aa)). One can recognise a POTRA domain in the interval 124-192 (FRITSVVING…GQLMIELTER (69 aa)).

Belongs to the FtsQ/DivIB family. FtsQ subfamily.

The protein localises to the cell inner membrane. In terms of biological role, essential cell division protein. This Bradyrhizobium diazoefficiens (strain JCM 10833 / BCRC 13528 / IAM 13628 / NBRC 14792 / USDA 110) protein is Cell division protein FtsQ.